Here is a 70-residue protein sequence, read N- to C-terminus: Cytoinsectotoxin-2c (70 aa).

This sequence belongs to the cationic peptide 06 (cytoinsectotoxin) family. Expressed by the venom gland.

The protein resides in the secreted. Its function is as follows. Insecticidal and antimicrobial peptide. Has insecticidal activity against larvae of flesh fly S.carnaria. Has antibacterial activity against Gram-positive bacterium B.subtilis B-501 (MIC=1.25 uM) and Gram-negative bacterium E.coli DH5alpha (MIC=2.5 uM). This is Cytoinsectotoxin-2c from Lachesana tarabaevi (Spider).